The chain runs to 256 residues: DNA repair protein RecO (256 aa).

The protein belongs to the RecO family.

Its function is as follows. Involved in DNA repair and RecF pathway recombination. This chain is DNA repair protein RecO, found in Thiobacillus denitrificans (strain ATCC 25259 / T1).